Here is a 687-residue protein sequence, read N- to C-terminus: E3 ubiquitin-protein ligase RNF19B (687 aa).

The tract at residues 1-294 (MRLRNDCLVR…VCGCEFCWLC (294 aa)) is required for ubiquitin ligase activity and for protection against staurosporin-induced cell death. The interval 53-88 (RTRAAPEPSVPSPPPSPPPPPPPPVSVPPPPSSPGG) is disordered. The span at 60–85 (PSVPSPPPSPPPPPPPPVSVPPPPSS) shows a compositional bias: pro residues. The segment at 91-313 (SLIECPLCLV…LSPSGCTFWG (223 aa)) is TRIAD supradomain. 14 residues coordinate Zn(2+): C95, C98, C118, C121, C182, C187, C204, C209, C214, C217, H222, C227, C263, and C266. Residues 95–144 (CPLCLVRQPPEEIPELLSCRHRSCLRCLRQYLRIEICESRVNLRCPECAE) form an RING-type 1 zinc finger. The segment at 161–227 (TRKYEEFLLR…KHVWHPNQTC (67 aa)) adopts an IBR-type zinc-finger fold. The RING-type 2; atypical zinc finger occupies 263 to 294 (CPRCSAYIIKMNDGSCNHMTCSVCGCEFCWLC). C278 is an active-site residue. 6 residues coordinate Zn(2+): C283, C286, C291, C294, H302, and C309. 2 helical membrane passes run 330–350 (LIGAPVGISLIAGIAIPAMVI) and 391–411 (VVAAVSVGIGVPIMLAYVYGV). Residues 618–662 (SIRSDLESSDAQSDDVPDLASEEYDSPHLFPPSPSNALQESPPHR) form a disordered region. Residues 629–641 (QSDDVPDLASEEY) show a composition bias toward acidic residues.

The protein belongs to the RBR family. RNF19 subfamily. As to quaternary structure, interacts with UBE2L3, UBE2L6 and UCKL1.

It localises to the cytoplasmic granule membrane. It is found in the endoplasmic reticulum membrane. It carries out the reaction [E2 ubiquitin-conjugating enzyme]-S-ubiquitinyl-L-cysteine + [acceptor protein]-L-lysine = [E2 ubiquitin-conjugating enzyme]-L-cysteine + [acceptor protein]-N(6)-ubiquitinyl-L-lysine.. It functions in the pathway protein modification; protein ubiquitination. E3 ubiquitin-protein ligase which accepts ubiquitin from E2 ubiquitin-conjugating enzymes UBE2L3 and UBE2L6 in the form of a thioester and then directly transfers the ubiquitin to targeted substrates, such as UCKL1. Involved in the cytolytic activity of natural killer cells and cytotoxic T-cells. Protects against staurosporin-induced cell death. The sequence is that of E3 ubiquitin-protein ligase RNF19B (rnf19b) from Xenopus laevis (African clawed frog).